A 319-amino-acid polypeptide reads, in one-letter code: Acetyl-coenzyme A carboxylase carboxyl transferase subunit beta, chloroplastic (319 aa).

Positions 47-319 (LWVQCDNCES…ELFYVLQSSS (273 aa)) constitute a CoA carboxyltransferase N-terminal domain. Zn(2+) is bound by residues Cys-51, Cys-54, Cys-70, and Cys-73. The segment at 51–73 (CDNCESLLYIRFLRENKSVCEEC) adopts a C4-type zinc-finger fold.

This sequence belongs to the AccD/PCCB family. In terms of assembly, acetyl-CoA carboxylase is a heterohexamer composed of biotin carboxyl carrier protein, biotin carboxylase and 2 subunits each of ACCase subunit alpha and ACCase plastid-coded subunit beta (accD). Requires Zn(2+) as cofactor.

It localises to the plastid. The protein localises to the chloroplast stroma. The catalysed reaction is N(6)-carboxybiotinyl-L-lysyl-[protein] + acetyl-CoA = N(6)-biotinyl-L-lysyl-[protein] + malonyl-CoA. It functions in the pathway lipid metabolism; malonyl-CoA biosynthesis; malonyl-CoA from acetyl-CoA: step 1/1. Functionally, component of the acetyl coenzyme A carboxylase (ACC) complex. Biotin carboxylase (BC) catalyzes the carboxylation of biotin on its carrier protein (BCCP) and then the CO(2) group is transferred by the transcarboxylase to acetyl-CoA to form malonyl-CoA. In Picea abies (Norway spruce), this protein is Acetyl-coenzyme A carboxylase carboxyl transferase subunit beta, chloroplastic.